Here is a 122-residue protein sequence, read N- to C-terminus: Small ribosomal subunit protein uS13 (122 aa).

Basic residues predominate over residues 97-114 (PVRGQRTHTNAKTRKGKS). A disordered region spans residues 97 to 122 (PVRGQRTHTNAKTRKGKSRLPIAGKE).

This sequence belongs to the universal ribosomal protein uS13 family. In terms of assembly, part of the 30S ribosomal subunit. Forms a loose heterodimer with protein S19. Forms two bridges to the 50S subunit in the 70S ribosome.

Functionally, located at the top of the head of the 30S subunit, it contacts several helices of the 16S rRNA. In the 70S ribosome it contacts the 23S rRNA (bridge B1a) and protein L5 of the 50S subunit (bridge B1b), connecting the 2 subunits; these bridges are implicated in subunit movement. Contacts the tRNAs in the A and P-sites. The chain is Small ribosomal subunit protein uS13 from Wolbachia sp. subsp. Brugia malayi (strain TRS).